Here is a 165-residue protein sequence, read N- to C-terminus: Late embryogenesis abundant protein D-113 (165 aa).

Low complexity predominate over residues 1-13 (MQSMKDAAASAKA). Disordered stretches follow at residues 1-76 (MQSM…IGGT) and 92-165 (GGTG…YRSY). A compositionally biased stretch (basic and acidic residues) spans 14–60 (GMEKAKASMQEKVDQMKTRDPNEKEMARERKEERQEDAELRKQEARH). A compositionally biased stretch (gly residues) spans 67–76 (HVGGGGIGGT). Residues 132–155 (TTGNQDFPNAASNNAGTRRNTRGG) show a composition bias toward polar residues.

It belongs to the LEA type 1 family.

In terms of biological role, LEA proteins are late embryonic proteins abundant in higher plant seed embryos. There are two subsets of LEA proteins (5a and 5b), the first ones are expressed when the cotyledon weight reach 80 mg and the second set are expressed above 100 mg. The function of those proteins is not known. The polypeptide is Late embryogenesis abundant protein D-113 (Gossypium hirsutum (Upland cotton)).